The following is a 336-amino-acid chain: TBC1 domain family member 21 (336 aa).

Residues 57-265 (GLHPFVRTEA…RLWEVLLTGK (209 aa)) form the Rab-GAP TBC domain.

Interacts with ACTB. Interacts with ARMC12, TOMM20, DNAH7 and RAP1A. Interacts with RAB10. As to expression, expressed in round and elongated spermatids (at protein level). Expressed specifically in adult testis and very weakly in fetal brain.

The protein resides in the cytoplasmic vesicle. The protein localises to the secretory vesicle. It is found in the acrosome. It localises to the cytoplasm. Its subcellular location is the cytoskeleton. Functionally, acts as a GTPase-activating protein for Rab family protein(s). Essential for the establishment of male fertility, and is required for both the production of normal sperm number and sperm function. Plays an important role in the formation of intact mitochondria, outer dense fibers and axoneme within the sperm tail. Essential for sperm mitochondrial sheath formation and for the interactions of ARMC12 with VDAC2 and VDAC3. May be involved in acrosome formation and cytoskeletal reorganization during spermiogenesis, possibly by regulating RAB3A activity. The polypeptide is TBC1 domain family member 21 (TBC1D21) (Homo sapiens (Human)).